A 305-amino-acid polypeptide reads, in one-letter code: Homoserine O-acetyltransferase (305 aa).

The Acyl-thioester intermediate role is filled by C142. Substrate is bound by residues K163 and S192. H235 (proton acceptor) is an active-site residue. E237 is an active-site residue. R249 is a binding site for substrate.

This sequence belongs to the MetA family.

The protein localises to the cytoplasm. It catalyses the reaction L-homoserine + acetyl-CoA = O-acetyl-L-homoserine + CoA. It functions in the pathway amino-acid biosynthesis; L-methionine biosynthesis via de novo pathway; O-acetyl-L-homoserine from L-homoserine: step 1/1. Its function is as follows. Transfers an acetyl group from acetyl-CoA to L-homoserine, forming acetyl-L-homoserine. The polypeptide is Homoserine O-acetyltransferase (Roseobacter denitrificans (strain ATCC 33942 / OCh 114) (Erythrobacter sp. (strain OCh 114))).